We begin with the raw amino-acid sequence, 459 residues long: Argininosuccinate lyase (459 aa).

The protein belongs to the lyase 1 family. Argininosuccinate lyase subfamily.

The protein localises to the cytoplasm. The enzyme catalyses 2-(N(omega)-L-arginino)succinate = fumarate + L-arginine. Its pathway is amino-acid biosynthesis; L-arginine biosynthesis; L-arginine from L-ornithine and carbamoyl phosphate: step 3/3. This chain is Argininosuccinate lyase, found in Bacillus licheniformis (strain ATCC 14580 / DSM 13 / JCM 2505 / CCUG 7422 / NBRC 12200 / NCIMB 9375 / NCTC 10341 / NRRL NRS-1264 / Gibson 46).